The sequence spans 516 residues: Arabinose import ATP-binding protein AraG (516 aa).

ABC transporter domains are found at residues 5-240 (LRFD…MVGR) and 240-497 (REIS…LPQS). Position 37–44 (37–44 (GENGAGKS)) interacts with ATP.

Belongs to the ABC transporter superfamily. Arabinose importer (TC 3.A.1.2.2) family. In terms of assembly, the complex is composed of two ATP-binding proteins (AraG), two transmembrane proteins (AraH) and a solute-binding protein (AraF).

Its subcellular location is the cell inner membrane. It carries out the reaction L-arabinose(out) + ATP + H2O = L-arabinose(in) + ADP + phosphate + H(+). Functionally, part of the ABC transporter complex AraFGH involved in arabinose import. Responsible for energy coupling to the transport system. The chain is Arabinose import ATP-binding protein AraG from Paraburkholderia xenovorans (strain LB400).